Here is a 1303-residue protein sequence, read N- to C-terminus: DNA-directed RNA polymerase subunit beta' (1303 aa).

Residues Cys60, Cys62, Cys75, and Cys78 each contribute to the Zn(2+) site. Asp535, Asp537, and Asp539 together coordinate Mg(2+). Zn(2+) is bound by residues Cys876, Cys953, Cys960, and Cys963.

The protein belongs to the RNA polymerase beta' chain family. The RNAP catalytic core consists of 2 alpha, 1 beta, 1 beta' and 1 omega subunit. When a sigma factor is associated with the core the holoenzyme is formed, which can initiate transcription. Mg(2+) serves as cofactor. Zn(2+) is required as a cofactor.

It catalyses the reaction RNA(n) + a ribonucleoside 5'-triphosphate = RNA(n+1) + diphosphate. DNA-dependent RNA polymerase catalyzes the transcription of DNA into RNA using the four ribonucleoside triphosphates as substrates. The chain is DNA-directed RNA polymerase subunit beta' from Saccharopolyspora erythraea (strain ATCC 11635 / DSM 40517 / JCM 4748 / NBRC 13426 / NCIMB 8594 / NRRL 2338).